The chain runs to 2074 residues: Cell adhesion molecule Dscam2 (2074 aa).

The signal sequence occupies residues 1–21 (MWISSRFFVILLLLNLDNTCS). Topologically, residues 22–1619 (EPFEAHLRGP…QTTVIFANIN (1598 aa)) are extracellular. Ig-like C2-type domains follow at residues 31-120 (PGFV…RIVS), 238-326 (PSVV…LRLT), 330-417 (PIQV…AELQ), 422-516 (PPVL…ARLN), 521-607 (PYIR…GEVT), 612-698 (PSIE…IKYT), 707-802 (PRWI…LKVN), and 805-902 (PYFS…LQVQ). 8 disulfides stabilise this stretch: cysteine 53–cysteine 109, cysteine 259–cysteine 310, cysteine 352–cysteine 400, cysteine 444–cysteine 500, cysteine 541–cysteine 590, cysteine 633–cysteine 686, cysteine 728–cysteine 783, and cysteine 826–cysteine 884. 4 Fibronectin type-III domains span residues 907–1003 (PPSV…TEPQ), 1008–1108 (PPLS…TMED), 1113–1211 (PPED…SEED), and 1215–1311 (APAD…TNRI). Residues 1312–1400 (PARIISFGGP…DRLTHTLIVQ (89 aa)) enclose the Ig-like C2-type 9 domain. Residues cysteine 1334 and cysteine 1382 are joined by a disulfide bond. Fibronectin type-III domains lie at 1402 to 1495 (PPTA…TQGQ) and 1496 to 1595 (SPGH…TKDG). A helical membrane pass occupies residues 1620–1640 (LLIPTIAAVSGMFCTIIMIIV). Over 1641 to 2074 (CYRHMLKNAP…KFFTAPTLPK (434 aa)) the chain is Cytoplasmic. Disordered stretches follow at residues 1739-1766 (EGCS…HQRP), 1778-1917 (PFHN…KSIS), 1936-1974 (SPSI…SLKQ), and 2011-2074 (PSSQ…TLPK). The segment covering 1757 to 1766 (THHHHHHQRP) has biased composition (basic residues). The segment covering 1831–1846 (AQSSTSSDLSPMSEQK) has biased composition (polar residues). Residues 1848 to 1858 (LPRRGRSRYHH) show a composition bias toward basic residues. Polar residues predominate over residues 1859-1868 (QQYQFSTNTT). Composition is skewed to low complexity over residues 1875-1903 (NKMN…SNSN), 1942-1974 (QQQK…SLKQ), and 2036-2051 (SQQS…QQHP). The span at 2055–2066 (LNPSTAMLSSKF) shows a compositional bias: polar residues.

The protein localises to the membrane. Cell adhesion molecule. The sequence is that of Cell adhesion molecule Dscam2 (Dscam2) from Drosophila melanogaster (Fruit fly).